Consider the following 635-residue polypeptide: Threonine--tRNA ligase (635 aa).

Residues Met-1–Thr-61 form the TGS domain. Residues Asp-242–Pro-533 are catalytic. The Zn(2+) site is built by Cys-333, His-384, and His-510.

It belongs to the class-II aminoacyl-tRNA synthetase family. Homodimer. Zn(2+) serves as cofactor.

The protein resides in the cytoplasm. It catalyses the reaction tRNA(Thr) + L-threonine + ATP = L-threonyl-tRNA(Thr) + AMP + diphosphate + H(+). Its function is as follows. Catalyzes the attachment of threonine to tRNA(Thr) in a two-step reaction: L-threonine is first activated by ATP to form Thr-AMP and then transferred to the acceptor end of tRNA(Thr). Also edits incorrectly charged L-seryl-tRNA(Thr). The chain is Threonine--tRNA ligase from Cupriavidus pinatubonensis (strain JMP 134 / LMG 1197) (Cupriavidus necator (strain JMP 134)).